Here is a 91-residue protein sequence, read N- to C-terminus: UPF0147 protein APE_2336a (91 aa).

This sequence belongs to the UPF0147 family.

In Aeropyrum pernix (strain ATCC 700893 / DSM 11879 / JCM 9820 / NBRC 100138 / K1), this protein is UPF0147 protein APE_2336a.